A 93-amino-acid chain; its full sequence is Small ribosomal subunit protein uS19 (93 aa).

Belongs to the universal ribosomal protein uS19 family.

Protein S19 forms a complex with S13 that binds strongly to the 16S ribosomal RNA. In Leptospira interrogans serogroup Icterohaemorrhagiae serovar copenhageni (strain Fiocruz L1-130), this protein is Small ribosomal subunit protein uS19.